The following is a 159-amino-acid chain: Small ribosomal subunit protein uS7 (159 aa).

Belongs to the universal ribosomal protein uS7 family. Part of the 30S ribosomal subunit. Contacts proteins S9 and S11.

Functionally, one of the primary rRNA binding proteins, it binds directly to 16S rRNA where it nucleates assembly of the head domain of the 30S subunit. Is located at the subunit interface close to the decoding center, probably blocks exit of the E-site tRNA. This is Small ribosomal subunit protein uS7 from Sulfurihydrogenibium sp. (strain YO3AOP1).